Here is a 67-residue protein sequence, read N- to C-terminus: Bowman-Birk type proteinase inhibitor A6 (67 aa).

Cystine bridges form between cysteine 9–cysteine 66, cysteine 10–cysteine 29, cysteine 13–cysteine 62, cysteine 16–cysteine 27, cysteine 36–cysteine 43, and cysteine 40–cysteine 54.

It belongs to the Bowman-Birk serine protease inhibitor family. Expressed in bulb (at protein level).

In terms of biological role, serine protease inhibitor. Strongly inhibits trypsin (Ki = 4 nM) and elastase (Ki = 4.8 nM). Also inhibits chymotrypsin with a Ki of 22 nM. Does not inhibit bacterial subtilisin. In Hyacinthus orientalis (Common hyacinth), this protein is Bowman-Birk type proteinase inhibitor A6.